The primary structure comprises 367 residues: Glutamate 5-kinase (367 aa).

Lys9 is a binding site for ATP. Residues Ser49, Asp136, and Asn148 each contribute to the substrate site. ATP-binding positions include 168 to 169 (TD) and 210 to 216 (TGGMKSK). Residues 276–350 (SGQIEVDAGA…GMQSQDIQVR (75 aa)) form the PUA domain.

Belongs to the glutamate 5-kinase family.

The protein localises to the cytoplasm. The catalysed reaction is L-glutamate + ATP = L-glutamyl 5-phosphate + ADP. It participates in amino-acid biosynthesis; L-proline biosynthesis; L-glutamate 5-semialdehyde from L-glutamate: step 1/2. In terms of biological role, catalyzes the transfer of a phosphate group to glutamate to form L-glutamate 5-phosphate. The chain is Glutamate 5-kinase from Bacillus cereus (strain ATCC 14579 / DSM 31 / CCUG 7414 / JCM 2152 / NBRC 15305 / NCIMB 9373 / NCTC 2599 / NRRL B-3711).